Consider the following 334-residue polypeptide: Adenine deaminase (334 aa).

Residues His17, His19, and His197 each contribute to the Zn(2+) site. Glu200 serves as the catalytic Proton donor. Asp278 provides a ligand contact to Zn(2+). Residue Asp279 coordinates substrate.

It belongs to the metallo-dependent hydrolases superfamily. Adenosine and AMP deaminases family. Adenine deaminase type 2 subfamily. The cofactor is Zn(2+).

The enzyme catalyses adenine + H2O + H(+) = hypoxanthine + NH4(+). Its function is as follows. Catalyzes the hydrolytic deamination of adenine to hypoxanthine. Plays an important role in the purine salvage pathway and in nitrogen catabolism. The protein is Adenine deaminase of Rhodospirillum rubrum (strain ATCC 11170 / ATH 1.1.1 / DSM 467 / LMG 4362 / NCIMB 8255 / S1).